Here is a 339-residue protein sequence, read N- to C-terminus: Tetraacyldisaccharide 4'-kinase (339 aa).

53–60 (TCGGAGKT) contacts ATP.

Belongs to the LpxK family.

The catalysed reaction is a lipid A disaccharide + ATP = a lipid IVA + ADP + H(+). It functions in the pathway glycolipid biosynthesis; lipid IV(A) biosynthesis; lipid IV(A) from (3R)-3-hydroxytetradecanoyl-[acyl-carrier-protein] and UDP-N-acetyl-alpha-D-glucosamine: step 6/6. Transfers the gamma-phosphate of ATP to the 4'-position of a tetraacyldisaccharide 1-phosphate intermediate (termed DS-1-P) to form tetraacyldisaccharide 1,4'-bis-phosphate (lipid IVA). This chain is Tetraacyldisaccharide 4'-kinase, found in Bartonella henselae (strain ATCC 49882 / DSM 28221 / CCUG 30454 / Houston 1) (Rochalimaea henselae).